The following is a 304-amino-acid chain: Uricase (304 aa).

Ala-2 carries the N-acetylalanine modification. Residues Lys-10 and Lys-23 each carry the N6-acetyllysine; alternate modification. Lys-10 and Lys-23 each carry N6-succinyllysine; alternate. The active-site Charge relay system is Lys-23. An N6-acetyllysine mark is found at Lys-27 and Lys-36. A phosphoserine mark is found at Ser-39 and Ser-63. Thr-68 functions as the Charge relay system in the catalytic mechanism. Urate-binding residues include Thr-68 and Asp-69. 3 positions are modified to N6-acetyllysine: Lys-118, Lys-122, and Lys-164. Phe-170 is a urate binding site. Residues Lys-175 and Lys-185 each carry the N6-acetyllysine modification. Residue Arg-187 coordinates urate. An N6-acetyllysine; alternate mark is found at Lys-221 and Lys-228. N6-succinyllysine; alternate occurs at positions 221 and 228. A Phosphoserine modification is found at Ser-232. Urate contacts are provided by Val-235, Gln-236, and Asn-262. The Charge relay system role is filled by His-264. Lys-278 carries the N6-acetyllysine modification. Tyr-289 carries the phosphotyrosine modification. Residues 302-304 carry the Microbody targeting signal motif; the sequence is SRL.

The protein belongs to the uricase family. In terms of assembly, homotetramer.

The protein resides in the peroxisome. The enzyme catalyses urate + O2 + H2O = 5-hydroxyisourate + H2O2. It functions in the pathway purine metabolism; urate degradation; (S)-allantoin from urate: step 1/3. In terms of biological role, catalyzes the oxidation of uric acid to 5-hydroxyisourate, which is further processed to form (S)-allantoin. This is Uricase (UOX) from Bos taurus (Bovine).